Consider the following 83-residue polypeptide: Toxin To12 (83 aa).

The signal sequence occupies residues 1–19 (MKGLILFICGFMMIGVILA). The 63-residue stretch at 20-82 (KEGYPMDHEG…VWDYYNNKCG (63 aa)) folds into the LCN-type CS-alpha/beta domain. 4 cysteine pairs are disulfide-bonded: cysteine 30–cysteine 81, cysteine 34–cysteine 57, cysteine 42–cysteine 62, and cysteine 46–cysteine 64. Position 81 is a cysteine amide (cysteine 81).

Belongs to the long (4 C-C) scorpion toxin superfamily. Sodium channel inhibitor family. Beta subfamily. As to expression, expressed by the venom gland.

It is found in the secreted. Functionally, beta toxins bind voltage-independently at site-4 of sodium channels (Nav) and shift the voltage of activation toward more negative potentials thereby affecting sodium channel activation and promoting spontaneous and repetitive firing. This chain is Toxin To12, found in Tityus obscurus (Amazonian scorpion).